Reading from the N-terminus, the 529-residue chain is Phosphoenolpyruvate carboxykinase (ATP) (529 aa).

The substrate site is built by Arg60, Tyr195, and Lys201. ATP is bound by residues Lys201, His220, and 236 to 244; that span reads GLSGTGKTT. Mn(2+)-binding residues include Lys201 and His220. Asp257 lines the Mn(2+) pocket. Residues Glu285, Arg323, and Ser448 each contribute to the ATP site. Arg323 provides a ligand contact to substrate.

The protein belongs to the phosphoenolpyruvate carboxykinase (ATP) family. Requires Mn(2+) as cofactor.

It localises to the cytoplasm. The enzyme catalyses oxaloacetate + ATP = phosphoenolpyruvate + ADP + CO2. The protein operates within carbohydrate biosynthesis; gluconeogenesis. In terms of biological role, involved in the gluconeogenesis. Catalyzes the conversion of oxaloacetate (OAA) to phosphoenolpyruvate (PEP) through direct phosphoryl transfer between the nucleoside triphosphate and OAA. This Geobacter sp. (strain M21) protein is Phosphoenolpyruvate carboxykinase (ATP).